The following is a 126-amino-acid chain: Tachykinin-3 (126 aa).

An N-terminal signal peptide occupies residues 1 to 20 (MRSTLLFAVILALSSARSLG). Positions 21–83 (AVCEESQEQV…VGPKESPLPQ (63 aa)) are excised as a propeptide. Position 95 is a methionine amide (methionine 95). Positions 99 to 126 (NLQPDTPVDINQENIPSFGTFKYPPSVE) are excised as a propeptide. The interval 102–126 (PDTPVDINQENIPSFGTFKYPPSVE) is disordered.

Belongs to the tachykinin family.

It is found in the secreted. In terms of biological role, tachykinins are active peptides which excite neurons, evoke behavioral responses, are potent vasodilators and secretagogues, and contract (directly or indirectly) many smooth muscles. Is a critical central regulator of gonadal function. The sequence is that of Tachykinin-3 (TAC3) from Bos taurus (Bovine).